The chain runs to 639 residues: 1-deoxy-D-xylulose-5-phosphate synthase (639 aa).

Residues H76 and A117–S119 contribute to the thiamine diphosphate site. D148 serves as a coordination point for Mg(2+). Residues G149–S150, N181, Y288, and E370 contribute to the thiamine diphosphate site. N181 contributes to the Mg(2+) binding site.

This sequence belongs to the transketolase family. DXPS subfamily. As to quaternary structure, homodimer. It depends on Mg(2+) as a cofactor. The cofactor is thiamine diphosphate.

It carries out the reaction D-glyceraldehyde 3-phosphate + pyruvate + H(+) = 1-deoxy-D-xylulose 5-phosphate + CO2. Its pathway is metabolic intermediate biosynthesis; 1-deoxy-D-xylulose 5-phosphate biosynthesis; 1-deoxy-D-xylulose 5-phosphate from D-glyceraldehyde 3-phosphate and pyruvate: step 1/1. Functionally, catalyzes the acyloin condensation reaction between C atoms 2 and 3 of pyruvate and glyceraldehyde 3-phosphate to yield 1-deoxy-D-xylulose-5-phosphate (DXP). This is 1-deoxy-D-xylulose-5-phosphate synthase from Leptothrix cholodnii (strain ATCC 51168 / LMG 8142 / SP-6) (Leptothrix discophora (strain SP-6)).